A 424-amino-acid polypeptide reads, in one-letter code: CinA-like protein (424 aa).

Belongs to the CinA family.

The polypeptide is CinA-like protein (Prochlorococcus marinus (strain MIT 9301)).